The following is a 556-amino-acid chain: mRNA-capping enzyme subunit beta (556 aa).

2 disordered regions span residues methionine 1–valine 28 and leucine 56–serine 217. Residues valine 63 to threonine 74 are compositionally biased toward polar residues. Positions glutamate 85–glycine 96 are enriched in acidic residues. Basic and acidic residues-rich tracts occupy residues threonine 103–glutamine 131 and isoleucine 139–phenylalanine 212.

It belongs to the fungal TPase family. Heterodimer. The mRNA-capping enzyme is composed of two separate chains alpha and beta, respectively a mRNA guanylyltransferase and an mRNA 5'-triphosphate monophosphatase. The cofactor is Mg(2+).

Its subcellular location is the nucleus. The catalysed reaction is a 5'-end triphospho-ribonucleoside in mRNA + H2O = a 5'-end diphospho-ribonucleoside in mRNA + phosphate + H(+). Functionally, first step of mRNA capping. Converts the 5'-triphosphate end of a nascent mRNA chain into a diphosphate end. The polypeptide is mRNA-capping enzyme subunit beta (CET1) (Kluyveromyces lactis (strain ATCC 8585 / CBS 2359 / DSM 70799 / NBRC 1267 / NRRL Y-1140 / WM37) (Yeast)).